Reading from the N-terminus, the 283-residue chain is Probable endonuclease 4 (283 aa).

Residues H67, H107, E144, D178, H181, H215, D228, H230, and E260 each coordinate Zn(2+).

The protein belongs to the AP endonuclease 2 family. It depends on Zn(2+) as a cofactor.

The catalysed reaction is Endonucleolytic cleavage to 5'-phosphooligonucleotide end-products.. Endonuclease IV plays a role in DNA repair. It cleaves phosphodiester bonds at apurinic or apyrimidinic (AP) sites, generating a 3'-hydroxyl group and a 5'-terminal sugar phosphate. This chain is Probable endonuclease 4, found in Citrifermentans bemidjiense (strain ATCC BAA-1014 / DSM 16622 / JCM 12645 / Bem) (Geobacter bemidjiensis).